A 757-amino-acid polypeptide reads, in one-letter code: Serine/threonine-protein phosphatase with EF-hands 2 (757 aa).

One can recognise an IQ domain in the interval 21 to 46 (KAAALIQRWYRRYMARLEMRRRCTWN). Positions 128–544 (ATALVEAFRL…PHIVQYQANK (417 aa)) are catalytic. Asp179, His181, Asp208, and Asn240 together coordinate Mn(2+). Catalysis depends on His241, which acts as the Proton donor. His292 contacts Mn(2+). Positions 318–349 (CKTRKESENREEQKRKDNQTSSGQKPTPWFLP) are disordered. The segment covering 321–335 (RKESENREEQKRKDN) has biased composition (basic and acidic residues). His492 contributes to the Mn(2+) binding site. EF-hand domains follow at residues 572–607 (AHSS…VLHL), 656–691 (RNRS…FSSH), and 696–731 (ITDD…VEQS). Asp585, Asp587, Ser589, Asp596, Asp669, Asp671, Ser673, Glu680, Asp709, Asn711, Asp713, His715, and Glu720 together coordinate Ca(2+).

It belongs to the PPP phosphatase family. Mn(2+) is required as a cofactor. As to expression, detected in retina, more specifically in photoreceptors.

It catalyses the reaction O-phospho-L-seryl-[protein] + H2O = L-seryl-[protein] + phosphate. The enzyme catalyses O-phospho-L-threonyl-[protein] + H2O = L-threonyl-[protein] + phosphate. With respect to regulation, activated by calcium. In terms of biological role, may play a role in phototransduction. May dephosphorylate photoactivated rhodopsin. May function as a calcium sensing regulator of ionic currents, energy production or synaptic transmission. The polypeptide is Serine/threonine-protein phosphatase with EF-hands 2 (Ppef2) (Mus musculus (Mouse)).